A 301-amino-acid chain; its full sequence is MPT51 antigen (301 aa).

A signal peptide spans 1–36; the sequence is MRGLSAVVRVLCVAALAVGVFAAAVLLAGTAGNAKA.

This sequence belongs to the mycobacterial A85 antigen family. Homodimer.

The protein resides in the secreted. May have a role in host tissue attachment, whereby ligands may include the serum protein fibronectin and small sugars. The protein is MPT51 antigen (mpt51) of Mycobacterium leprae (strain TN).